We begin with the raw amino-acid sequence, 490 residues long: MMSARSVSPKVLLDISYKPTLPNIMELQNNVIKLIQVEQQAYMQSGYQLQHQQQHLHSHQHHQQHHQQQHAQYAPLPSEYAAYGITELEDTDYNIPSNEVLSTSSNQSAQSTSLELNNNNTSSNTNSSGNNPSGFDGQASSGSSWNEHGKRARSSGDYDCQTGGSLVMQPEHKKLIHQQQQQQQQHQQQIYVDYLPTTVDEVASAQSCPGVQSTCTSPQSHFDFPDEELPEHKAQVFLPLYNNQQQQSQQLQQQQPHQQSHAQMHFQNAYRQSFEGYEPANSLNGSAYSSSDRDDMEYARHNALSSVSDLNGGVMSPACLADDGSAGSLLDGSDAGGKAFRKPRRRLKRKPSKTEETDEFSNQRVMANVRERQRTQSLNDAFKSLQQIIPTLPSDKLSKIQTLKLATRYIDFLCRMLSSSDISLLKALEAQGSPSAYGSASSLLSAAANGAEADLKCLRKANGAPIIPPEKLSYLFGVWRMEGDAQHQKA.

Disordered regions lie at residues 48 to 72 (QLQHQQQHLHSHQHHQQHHQQQHAQ), 96 to 165 (PSNE…TGGS), and 244 to 264 (QQQQSQQLQQQQPHQQSHAQM). Residues 54–68 (QHLHSHQHHQQHHQQ) show a composition bias toward basic residues. Composition is skewed to low complexity over residues 102 to 134 (STSSNQSAQSTSLELNNNNTSSNTNSSGNNPSG) and 244 to 263 (QQQQSQQLQQQQPHQQSHAQ). A phosphoserine mark is found at serine 325 and serine 328. The interval 330–361 (LDGSDAGGKAFRKPRRRLKRKPSKTEETDEFS) is disordered. Over residues 339–351 (AFRKPRRRLKRKP) the composition is skewed to basic residues. Residues 362 to 413 (NQRVMANVRERQRTQSLNDAFKSLQQIIPTLPSDKLSKIQTLKLATRYIDFL) enclose the bHLH domain.

As to quaternary structure, efficient DNA binding requires dimerization with another bHLH protein. Homodimer. Interacts with akirin. As to expression, expressed in embryonic abdomen; a single cell ventrally, pairs of cells laterally and three cells dorsally in each hemisegment. In the thorax, there are patches of cells associated with the imaginal disks. During larval development, cells proliferate and, in the abdomen, they form ventral, lateral and dorsal clusters, which are the precursors of the adult abdominal muscles. In the thorax, they form populations of cells in the imaginal disks that correspond to the adepithelial cells.

It localises to the nucleus. Functionally, involved in the establishment and dorsoventral patterning of germ layers in the embryo. The sequence is that of Protein twist (twi) from Drosophila melanogaster (Fruit fly).